The chain runs to 205 residues: Glycerol-3-phosphate acyltransferase (205 aa).

Over 1-3 the chain is Periplasmic; sequence MSA. A helical membrane pass occupies residues 4–24; that stretch reads IAPGMILIAYLCGSISSAILV. Residues 25–52 lie on the Cytoplasmic side of the membrane; sequence CRLCGLPDPRTSGSGNPGATNVLRIGGK. The helical transmembrane segment at 53–73 threads the bilayer; that stretch reads GAAVAVLIFDVLKGMLPVWGA. Residues 74–80 are Periplasmic-facing; sequence YELGVSP. A helical membrane pass occupies residues 81–101; sequence FWLGLIAIAACLGHIWPVFFG. Residues 102–111 lie on the Cytoplasmic side of the membrane; that stretch reads FKGGKGVATA. Residues 112 to 132 form a helical membrane-spanning segment; that stretch reads FGAIAPISWDLTGVMAGTWLL. At 133–137 the chain is on the periplasmic side; it reads TVLLS. The helical transmembrane segment at 138–158 threads the bilayer; that stretch reads GYSSLGAIVSALIAPFYVWWF. Residues 159–205 are Cytoplasmic-facing; sequence KPQFTFPVSMLSCLILLRHHDNIQRLWRRQETKIWTKFKRKREKDPE.

It belongs to the PlsY family. In terms of assembly, probably interacts with PlsX.

It localises to the cell inner membrane. It carries out the reaction sn-glycerol 3-phosphate + an acyl-CoA = a 1-acyl-sn-glycero-3-phosphate + CoA. The enzyme catalyses a fatty acyl-[ACP] + sn-glycerol 3-phosphate = a 1-acyl-sn-glycero-3-phosphate + holo-[ACP]. It functions in the pathway lipid metabolism; phospholipid metabolism. Its function is as follows. Catalyzes the transfer of an acyl group from acyl-ACP to glycerol-3-phosphate (G3P) to form lysophosphatidic acid (LPA). This enzyme can also utilize acyl-CoA as fatty acyl donor, but not acyl-PO(4). The chain is Glycerol-3-phosphate acyltransferase from Shigella flexneri serotype 5b (strain 8401).